Here is a 306-residue protein sequence, read N- to C-terminus: tRNA pseudouridine synthase B (306 aa).

Asp-48 (nucleophile) is an active-site residue.

The protein belongs to the pseudouridine synthase TruB family. Type 1 subfamily.

The catalysed reaction is uridine(55) in tRNA = pseudouridine(55) in tRNA. In terms of biological role, responsible for synthesis of pseudouridine from uracil-55 in the psi GC loop of transfer RNAs. The sequence is that of tRNA pseudouridine synthase B from Chromobacterium violaceum (strain ATCC 12472 / DSM 30191 / JCM 1249 / CCUG 213 / NBRC 12614 / NCIMB 9131 / NCTC 9757 / MK).